We begin with the raw amino-acid sequence, 101 residues long: Small ribosomal subunit protein uS14 (101 aa).

This sequence belongs to the universal ribosomal protein uS14 family. As to quaternary structure, part of the 30S ribosomal subunit. Contacts proteins S3 and S10.

Its function is as follows. Binds 16S rRNA, required for the assembly of 30S particles and may also be responsible for determining the conformation of the 16S rRNA at the A site. The sequence is that of Small ribosomal subunit protein uS14 from Haemophilus influenzae (strain PittGG).